A 321-amino-acid chain; its full sequence is Aspartate carbamoyltransferase catalytic subunit (321 aa).

The carbamoyl phosphate site is built by Arg-65 and Thr-66. Lys-93 is a binding site for L-aspartate. The carbamoyl phosphate site is built by Arg-115, His-143, and Gln-146. The L-aspartate site is built by Arg-176 and Arg-230. Carbamoyl phosphate contacts are provided by Gly-271 and Pro-272.

This sequence belongs to the aspartate/ornithine carbamoyltransferase superfamily. ATCase family. As to quaternary structure, heterododecamer (2C3:3R2) of six catalytic PyrB chains organized as two trimers (C3), and six regulatory PyrI chains organized as three dimers (R2).

The enzyme catalyses carbamoyl phosphate + L-aspartate = N-carbamoyl-L-aspartate + phosphate + H(+). Its pathway is pyrimidine metabolism; UMP biosynthesis via de novo pathway; (S)-dihydroorotate from bicarbonate: step 2/3. Its function is as follows. Catalyzes the condensation of carbamoyl phosphate and aspartate to form carbamoyl aspartate and inorganic phosphate, the committed step in the de novo pyrimidine nucleotide biosynthesis pathway. The polypeptide is Aspartate carbamoyltransferase catalytic subunit (Bartonella tribocorum (strain CIP 105476 / IBS 506)).